We begin with the raw amino-acid sequence, 91 residues long: Acylphosphatase (91 aa).

The Acylphosphatase-like domain maps to 3–90; it reads QYRIIVDGRV…EGHHRFSIVY (88 aa). Residues R18 and N36 contribute to the active site.

The protein belongs to the acylphosphatase family.

The catalysed reaction is an acyl phosphate + H2O = a carboxylate + phosphate + H(+). In Bacillus subtilis (strain 168), this protein is Acylphosphatase (acyP).